The sequence spans 262 residues: Putative hydro-lyase RHA1_ro03475 (262 aa).

This sequence belongs to the D-glutamate cyclase family.

The protein is Putative hydro-lyase RHA1_ro03475 of Rhodococcus jostii (strain RHA1).